Here is a 286-residue protein sequence, read N- to C-terminus: MKLIAVSGGPDSMLLLDVFKHHDIVVAHVNYNKRNSSKRDQKIVEDYCFKNNIKLEILNLTDYEVKGNFHDWARKKRFDFFKLVYEKYNCDEILLAHHKDDFVETFLIQKNQKRKPLYWSIKSKNFNFGMNINRPFIHKYWKNQILKILDNKQIFFGQDETNKENIYLRNKIRNNLLNKEFLKRLIYIKILFLNFFKLRKIKKIEQDFNKWKEQNFDKQNFLKSKFQENLITIFISEKTNNSINLSRGKIQQIIKFINSEKNEKKFILNKEFYLVKAKKIIKVLKK.

7–12 is a binding site for ATP; that stretch reads SGGPDS.

The protein belongs to the tRNA(Ile)-lysidine synthase family.

Its subcellular location is the cytoplasm. The catalysed reaction is cytidine(34) in tRNA(Ile2) + L-lysine + ATP = lysidine(34) in tRNA(Ile2) + AMP + diphosphate + H(+). Functionally, ligates lysine onto the cytidine present at position 34 of the AUA codon-specific tRNA(Ile) that contains the anticodon CAU, in an ATP-dependent manner. Cytidine is converted to lysidine, thus changing the amino acid specificity of the tRNA from methionine to isoleucine. This chain is tRNA(Ile)-lysidine synthase, found in Mycoplasmopsis pulmonis (strain UAB CTIP) (Mycoplasma pulmonis).